The primary structure comprises 345 residues: Uroporphyrinogen decarboxylase (345 aa).

Residues 27–31 (RQAGR), phenylalanine 46, aspartate 76, tyrosine 152, serine 207, and histidine 321 each bind substrate.

It belongs to the uroporphyrinogen decarboxylase family. Homodimer.

Its subcellular location is the cytoplasm. The enzyme catalyses uroporphyrinogen III + 4 H(+) = coproporphyrinogen III + 4 CO2. It functions in the pathway porphyrin-containing compound metabolism; protoporphyrin-IX biosynthesis; coproporphyrinogen-III from 5-aminolevulinate: step 4/4. Catalyzes the decarboxylation of four acetate groups of uroporphyrinogen-III to yield coproporphyrinogen-III. This Staphylococcus aureus (strain bovine RF122 / ET3-1) protein is Uroporphyrinogen decarboxylase.